Here is a 27-residue protein sequence, read N- to C-terminus: Metalloproteinase inhibitor 1 (27 aa).

Residues 1-12 (IEPERQEEEEEE) are compositionally biased toward acidic residues. Residues 1-27 (IEPERQEEEEEETRQRVRRGQVRQQQQ) are disordered.

Functionally, metalloproteinase inhibitor, active on a globulinase from L.albus seeds, thermolysin and gelatinase B. The sequence is that of Metalloproteinase inhibitor 1 from Lupinus albus (White lupine).